Consider the following 282-residue polypeptide: HMG box-containing protein R545 (282 aa).

The segment at Met1–Asp282 is disordered. Positions Asp16 to Asn29 are enriched in acidic residues. A compositionally biased stretch (basic residues) spans Lys70–Lys87. Positions Asp93 to Asp121 are enriched in acidic residues. Positions Lys127–Lys153 are enriched in basic residues. 2 stretches are compositionally biased toward basic and acidic residues: residues Thr176–Leu187 and Arg197–Met214. Residues Pro183–Ser252 constitute a DNA-binding region (HMG box). The segment covering Thr253 to Lys273 has biased composition (basic residues).

The sequence is that of HMG box-containing protein R545 from Acanthamoeba polyphaga mimivirus (APMV).